The following is a 413-amino-acid chain: Falstatin (413 aa).

The signal sequence occupies residues 1–21 (MNLLVFFCFFLLSCIVHLSRC). Residues 284–294 (LDSVNGNGFVW) carry the BC loop; binds and inhibits the active site cavity of cysteine proteases motif. Composition is skewed to polar residues over residues 325-339 (ISVT…NSNT) and 346-360 (NNKQ…TTNH). The disordered stretch occupies residues 325–367 (ISVTNPVPIPKNSNTNKDDSINNKQDGSQNNTTTNHFPKPREQ).

Belongs to the protease inhibitor I71 family. Oligomer; probably composed of 10 monomers. Post-translationally, proteolytically cleaved.

The protein resides in the secreted. It is found in the cytoplasmic vesicle. It localises to the secretory vesicle. The protein localises to the microneme. Its subcellular location is the parasitophorous vacuole lumen. The protein resides in the host cytoplasm. Functionally, cysteine protease inhibitor. Inhibits cysteine protease falcipains FP2 and FP3. Required for the invasion of host erythrocytes by merozoites. In the mosquito vector, essential for the gliding motility of hemocoel sporozoites and, therefore, for salivary gland invasion and the subsequent transmission from the mosquito to the mammalian host. Required for the invasion of host hepatocytes. During the liver stage, may prevent host hepatocyte cell death likely by inhibiting host cysteine proteases. In Plasmodium falciparum (isolate 3D7), this protein is Falstatin.